We begin with the raw amino-acid sequence, 531 residues long: Serine protease gd (531 aa).

Positions 1–19 are cleaved as a signal peptide; it reads MRLHLAAILILCIEHVTKA. Residues 155-174 form a disordered region; sequence PEEEEVRKTDDKPPSTPHIQ. Residues 246–531 form the Peptidase S1 domain; the sequence is IESDSADSLP…FLDWITAFVI (286 aa). Asn272 is a glycosylation site (N-linked (GlcNAc...) asparagine). The cysteines at positions 280 and 296 are disulfide-linked. Residues His295 and Asp350 each act as charge relay system in the active site. 2 N-linked (GlcNAc...) asparagine glycosylation sites follow: Asn397 and Asn445. Cysteines 432 and 449 form a disulfide. Ser471 (charge relay system) is an active-site residue.

Belongs to the peptidase S1 family. Proteolytically activated by the protease ndl. Expression begins in previtellogenic stages and is seen in germline-derived nurse cells of the germarium. Expression continues throughout oogenesis with transcripts from the nurse cells accumulating in the oocytes. Most abundant in the ovaries, the level of protein decreases from the moment of egg laying and is essentially gone by 4 hours.

It localises to the secreted. Component of the extracellular signaling pathway that establishes the dorsal-ventral pathway of the embryo. A protease cascade involving ndl, gd, snk and ea results in activation of the spz Toll receptor ligand; acts downstream of ndl but upstream of snk and ea. Activation of ea requires activation of the ndl-gd-snk protease cascade and sulfation of a vitelline membrane component by pip. Localized activation of the Toll receptor in the ventral region of the embryo defines cell identities along the dorsal-ventral continuum. This is Serine protease gd from Drosophila melanogaster (Fruit fly).